A 271-amino-acid polypeptide reads, in one-letter code: Transmembrane protein 33 homolog (271 aa).

The interval 1–32 (MVEIVEEPDDHQSSSTGAGSSGSSSAPPPPPP) is disordered. Over residues 13 to 25 (SSSTGAGSSGSSS) the composition is skewed to low complexity. 3 helical membrane-spanning segments follow: residues 56-76 (VLTVFFALNYMIPFIGLVPAH), 125-145 (VVFLMAAPVSMAALPVTIYAA), and 180-200 (ALGIIACSEIFLVPLLVSLIF).

The protein belongs to the PER33/POM33 family.

The protein localises to the membrane. The protein is Transmembrane protein 33 homolog of Caenorhabditis elegans.